Consider the following 490-residue polypeptide: MKGLLSLSVLPVLAYASPMIVDSIHQDAAPILSSTNAKDIPDSYIVVFKKGVSSSSALAHQTWVQEIHTSTESKRLKKRNQFTFKNEAFDGLKHTFDIAGGLLGYSGHFDEEVIEQVRRHPDVEYIERDSEVRALESVTENGAPWGLARISHRKRLNFGTFNKYIYAAQGGEGVDAYVIDTGTNIEHVDFEGRASWGKTIPENDDDIDGNGHGTHCSGTIAGKKYGVAKKAHVHAVKVLRTSGSGTMSDVVKGVQWAAESHLKQVGETKKGNRKGFKGSVANMSLGGGKSVTLDRVVDQAVAVGMHFAVAAGNDNADACNYSPAASQNSITVGASTLTDERAYFSNYGKCTDIFAPGLNIQSTWIGSKYAVNTISGTSMASPHICGLLAYFLSLQPASDSAFAVAEITPAEMKENMISIASKNALTDIPADTPNLLAWNGGGSDNYKEIVGGKDNATKEHISSTLTEKLEQLAEEGLTAIYNELKDVVVA.

The signal sequence occupies residues 1-26 (MKGLLSLSVLPVLAYASPMIVDSIHQ). Positions 27 to 134 (DAAPILSSTN…YIERDSEVRA (108 aa)) are excised as a propeptide. Positions 43–133 (SYIVVFKKGV…EYIERDSEVR (91 aa)) constitute an Inhibitor I9 domain. Residues 144–450 (PWGLARISHR…GGSDNYKEIV (307 aa)) form the Peptidase S8 domain. Residues aspartate 180 and histidine 212 each act as charge relay system in the active site. N-linked (GlcNAc...) asparagine glycosylation occurs at asparagine 282. Serine 378 (charge relay system) is an active-site residue. Asparagine 455 carries an N-linked (GlcNAc...) asparagine glycan.

It belongs to the peptidase S8 family.

The protein localises to the secreted. Secreted subtilisin-like serine protease with keratinolytic activity that contributes to pathogenicity. The protein is Subtilisin-like protease 8 (SUB8) of Arthroderma otae (strain ATCC MYA-4605 / CBS 113480) (Microsporum canis).